The following is a 641-amino-acid chain: MNLCSSGATASTTSLSSTGQAERSGGGGVAGGGGISNGGGGGGGVTGSGGGGGGNTSDGLSEATHCFGGSGGGATASGPEETINAISPANGGGASGAQQPSGSNGQLHNENNAIMPPETRPKMVTVKHPESNKPKPTTKKSKPIQADQDVIKALQRCRDEGIKRLDLSKSSITVIPSTVKDCVQITELYLYSNKIGQLPPEIGCLVNLRNLALNENSLTSLPESLQNCNQLKVLDLRHNKLAEIPPVIYRLRSLTTLYLRFNRITAVADDLRQLVNLTMLSLRENKIRELGSAIGALVNLTTLDVSHNHLEHLPEDIGNCVNLSALDLQHNELLDIPDSIGNLKSLVRLGMRYNRLTSVPATLKNCKCMDEFNVEGNGITQLPDGMLASLSGLTTITLSRNQFTSYPTGGPAQFTNVYSINLEHNRIDKIPYGIFSRAKGLTKLNMKENMLTALPLDIGTWVNMVELNLATNALQKLPDDIMNLQNLEILILSNNMLKKIPNTIGNLRRLRILDLEENRIETLPHEIGLLHELQRLILQTNQITMLPRSIGHLGNLTHLSVSENNLQFLPEEIGSLESLENLYINQNPGLEKLPFELALCQNLKYLNIDKCPLSTIPPEIQAGGPSLVLQWLKMHSPYRQM.

Residues 1-19 (MNLCSSGATASTTSLSSTG) show a composition bias toward low complexity. The disordered stretch occupies residues 1–146 (MNLCSSGATA…TTKKSKPIQA (146 aa)). Residues 24-56 (SGGGGVAGGGGISNGGGGGGGVTGSGGGGGGNT) show a composition bias toward gly residues. Low complexity predominate over residues 96 to 106 (GAQQPSGSNGQ). LRR repeat units follow at residues 161–182 (GIKR…VKDC), 184–205 (QITE…IGCL), 207–228 (NLRN…LQNC), 230–251 (QLKV…IYRL), 253–274 (SLTT…LRQL), 276–297 (NLTM…IGAL), 299–320 (NLTT…IGNC), 322–343 (NLSA…IGNL), 345–367 (SLVR…KNCK), 368–389 (CMDE…MLAS), 392–413 (GLTT…GPAQ), 416–437 (NVYS…IFSR), 440–461 (GLTK…IGTW), 463–484 (NMVE…IMNL), 486–507 (NLEI…IGNL), 509–530 (RLRI…IGLL), 532–553 (ELQR…IGHL), 555–576 (NLTH…IGSL), 578–600 (SLEN…LALC), and 602–623 (NLKY…IQAG).

It belongs to the SHOC2 family.

Acts as a Ras effector and participates in MAPK pathway activation. Probably acts as a regulatory subunit of protein phosphatase that specifically dephosphorylates Raf kinase and stimulate Raf activity at specialized signaling complexes upon Ras activation. The sequence is that of Leucine-rich repeat protein soc-2 homolog (Sur-8) from Drosophila ananassae (Fruit fly).